Here is a 133-residue protein sequence, read N- to C-terminus: Napin-1 (133 aa).

2 consecutive propeptides follow at residues 31–49 and 131–133; these read PSWT…EKQG and PSY.

The protein belongs to the 2S seed storage albumins family. In terms of assembly, the mature protein consists of a small and a large chain linked by disulfide bonds. As to expression, cotyledons and the axis.

In terms of biological role, the small, basic, water-soluble napins are one of the two major kinds of storage proteins synthesized in the seed during its maturation. The chain is Napin-1 from Brassica napus (Rape).